Reading from the N-terminus, the 1070-residue chain is DNA-directed RNA polymerase subunit beta (1070 aa).

Belongs to the RNA polymerase beta chain family. In plastids the minimal PEP RNA polymerase catalytic core is composed of four subunits: alpha, beta, beta', and beta''. When a (nuclear-encoded) sigma factor is associated with the core the holoenzyme is formed, which can initiate transcription.

It localises to the plastid. The protein localises to the chloroplast. The enzyme catalyses RNA(n) + a ribonucleoside 5'-triphosphate = RNA(n+1) + diphosphate. DNA-dependent RNA polymerase catalyzes the transcription of DNA into RNA using the four ribonucleoside triphosphates as substrates. This Nicotiana tomentosiformis (Tobacco) protein is DNA-directed RNA polymerase subunit beta.